The following is a 1107-amino-acid chain: MGSKGAYRYHWQSHNVKHSGVDDMVLLSKITESSIVENLKKRYMDDYIFTYIGSVLISVNPFKQMPYFGEKEVEMYQGAAQYENPPHIYALADSMYRNMIIDRENQCVIISGESGAGKTVAAKYIMSYVSRVSGGGPKVQHVKDIILQSNPLLEAFGNAKTVRNNNSSRFGKYFEIQFSPGGEPDGGKISNFLLEKSRVVMRNPGERSFHIFYQLIEGASPEQKQSLGITSMDYYYYLSLSGSYKVDDIDDKRDFQETLHAMNVIGIFSEEQTLVLQIVAGILHLGNISFKEVGNYAAVESEEFLAFPAYLLGINQDRLKEKLTSRQMDSKWGGKSESIHVTLNVEQACYTRDALAKALHARVFDFLVDSINKAMEKDHEEYNIGVLDIYGFEIFQKNGFEQFCINFVNEKLQQIFIELTLKAEQEEYVQEGIRWTPIEYFNNKIVCDLIESKVNPPGIMSILDDVCATMHAVGEGADQTLLQKLQMQIGSHEHFNSWNQGFIIHHYAGKVSYDMDGFCERNRDVLFMDLIELMQSSELPFIKSLFPENLQADKKGRPTTAGSKIKKQANDLVSTLMKCTPHYIRCIKPNETKKPKDWEESRVKHQVEYLGLKENIRVRRAGYAYRRVFQKFLQRYAILTKATWPVWRGDEKQGVLHLLQSVNMDSDQFQLGRSKVFIKAPESLFLLEEMRERKYDGYARVIQKTWRKFVARKKYVQMREEASDLLLNKKERRRNSINRNFIGDYIGMEERPELQQFVGKREKIDFADTVTKYDRRFKGVKRDLLLTPKCLYLIGREKVKQGPDKGVVKEVLKRRIEVERILSVSLSTMQDDIFILHEQEYDSLLESVFKTEFLSLLAKRYEEKTQKQLPLKFSNTLELKLKKENWGPWSAGGSRQVQFHQGFGDLAILKPSNKVLQVSIGPGLPKNSRPTRRNTVTSRGYPGGTKNNYPMRAAPAPPGCHQNGVIRNQFVPPPHAFGNQRSNQKSLYTSMARPPLPRQQSTGSDRLSQTPESLDFLKVPDQGVAGVRRQTSSRPPPAGGRPKPQPKPKPQVPQCKALYAYDAQDTDELSFNANDIIDIIKEDPSGWWTGRLRGKQGLFPNNYVTKI.

Residues 19–692 (SGVDDMVLLS…SLFLLEEMRE (674 aa)) enclose the Myosin motor domain. ATP is bound at residue 112 to 119 (GESGAGKT). Residues 581–591 (PHYIRCIKPNE) are actin-binding. An IQ domain is found at 695–724 (YDGYARVIQKTWRKFVARKKYVQMREEASD). Positions 730 to 922 (KERRRNSINR…NKVLQVSIGP (193 aa)) constitute a TH1 domain. The tract at residues 919–1052 (SIGPGLPKNS…KPQPKPKPQV (134 aa)) is disordered. Composition is skewed to polar residues over residues 979–989 (NQRSNQKSLYT) and 998–1012 (RQQS…QTPE). S1001 carries the phosphoserine modification. A compositionally biased stretch (pro residues) spans 1034–1051 (RPPPAGGRPKPQPKPKPQ). In terms of domain architecture, SH3 spans 1050–1107 (PQVPQCKALYAYDAQDTDELSFNANDIIDIIKEDPSGWWTGRLRGKQGLFPNNYVTKI).

The protein belongs to the TRAFAC class myosin-kinesin ATPase superfamily. Myosin family. In terms of assembly, interacts with CALM and F-actin. Interacts (via SH3 domain) with SYNJ1, DNM1 and DNM2. Interacts with ARL14EP. Interacts with CARMIL1. Detected in kidney glomeruli (at protein level). Detected in utricle.

It is found in the cytoplasm. It localises to the cell junction. The protein resides in the cytoplasmic vesicle. The protein localises to the clathrin-coated vesicle. Its subcellular location is the cytoskeleton. Its function is as follows. Myosins are actin-based motor molecules with ATPase activity. Unconventional myosins serve in intracellular movements. Their highly divergent tails bind to membranous compartments, which are then moved relative to actin filaments. Binds to membranes containing anionic phospholipids via its tail domain. Involved in clathrin-mediated endocytosis and intracellular movement of clathrin-coated vesicles. Required for normal morphology of the glomerular basement membrane, normal development of foot processes by kidney podocytes and normal kidney function. In dendritic cells, may control the movement of class II-containing cytoplasmic vesicles along the actin cytoskeleton by connecting them with the actin network via ARL14EP and ARL14. The sequence is that of Unconventional myosin-Ie (Myo1e) from Mus musculus (Mouse).